The chain runs to 496 residues: ATP synthase subunit beta, chloroplastic (496 aa).

170-177 (GGAGVGKT) is a binding site for ATP.

Belongs to the ATPase alpha/beta chains family. F-type ATPases have 2 components, CF(1) - the catalytic core - and CF(0) - the membrane proton channel. CF(1) has five subunits: alpha(3), beta(3), gamma(1), delta(1), epsilon(1). CF(0) has four main subunits: a(1), b(1), b'(1) and c(9-12).

It localises to the plastid. The protein resides in the chloroplast thylakoid membrane. It catalyses the reaction ATP + H2O + 4 H(+)(in) = ADP + phosphate + 5 H(+)(out). In terms of biological role, produces ATP from ADP in the presence of a proton gradient across the membrane. The catalytic sites are hosted primarily by the beta subunits. The polypeptide is ATP synthase subunit beta, chloroplastic (Dioscorea elephantipes (Elephant's foot yam)).